Consider the following 187-residue polypeptide: Large ribosomal subunit protein bL25 (187 aa).

The protein belongs to the bacterial ribosomal protein bL25 family. CTC subfamily. Part of the 50S ribosomal subunit; part of the 5S rRNA/L5/L18/L25 subcomplex. Contacts the 5S rRNA. Binds to the 5S rRNA independently of L5 and L18.

In terms of biological role, this is one of the proteins that binds to the 5S RNA in the ribosome where it forms part of the central protuberance. This Tropheryma whipplei (strain Twist) (Whipple's bacillus) protein is Large ribosomal subunit protein bL25.